Reading from the N-terminus, the 47-residue chain is Potassium channel toxin TcoKIK (47 aa).

The BetaSPN-type CS-alpha/beta domain maps to 14–47; that stretch reads EYACPAIDKFCEDHCAAKKAVGKCDDFKCNCIKL. 3 cysteine pairs are disulfide-bonded: Cys17-Cys37, Cys24-Cys42, and Cys28-Cys44.

Belongs to the long chain scorpion toxin family. Class 2 subfamily. Expressed by the venom gland.

The protein localises to the secreted. It localises to the target cell membrane. Functionally, blocks voltage-gated potassium channels. Its application (10 uM) to cells recombinantly expressing channels results in membrane damage and cell lysis. This chain is Potassium channel toxin TcoKIK, found in Tityus costatus (Brazilian scorpion).